A 404-amino-acid chain; its full sequence is MKLPIYLDYSATTPVDPRVAEKMMQFLTMDGTFGNPASRSHRFGWQAEEAVDIARNQIAELVGADPREIVFTSGATESDNLAIKGAANFYQKKGKHIITSKTEHKAVLDTCRQLEREGFEVTYLAPQSNGIIDLKELEAAMRDDTILVSIMHVNNEIGVVQDIATIGEMCRARGIIYHVDATQSVGKLPIDLSQLKVDLMSFSGHKIYGPKGIGALYVRRKPRIRIEAQIHGGGHERGMRSGTLPVHQIVGMGEAYRIAKEEMESEMARLRTLRNRLWNGVKDMEEVYLNGDLEQGAPNILNVSFNYVEGESLIMALKDLAVSSGSACTSASLEPSYVLRALGMTDELAHSSIRFSLGRFTTEEEIDYAIDLIRKSIGRLRELSPLWEMFKQGVDLNSIEWSHH.

Pyridoxal 5'-phosphate is bound by residues 75–76 (AT), Asn155, Gln183, and 203–205 (SGH). An N6-(pyridoxal phosphate)lysine modification is found at Lys206. Thr243 contributes to the pyridoxal 5'-phosphate binding site. Cys328 (cysteine persulfide intermediate) is an active-site residue. Residue Cys328 coordinates [2Fe-2S] cluster.

It belongs to the class-V pyridoxal-phosphate-dependent aminotransferase family. NifS/IscS subfamily. Homodimer. Forms a heterotetramer with IscU, interacts with other sulfur acceptors. The cofactor is pyridoxal 5'-phosphate.

The protein resides in the cytoplasm. It carries out the reaction (sulfur carrier)-H + L-cysteine = (sulfur carrier)-SH + L-alanine. It functions in the pathway cofactor biosynthesis; iron-sulfur cluster biosynthesis. Its function is as follows. Master enzyme that delivers sulfur to a number of partners involved in Fe-S cluster assembly, tRNA modification or cofactor biosynthesis. Catalyzes the removal of elemental sulfur atoms from cysteine to produce alanine. Functions as a sulfur delivery protein for Fe-S cluster synthesis onto IscU, an Fe-S scaffold assembly protein, as well as other S acceptor proteins. The sequence is that of Cysteine desulfurase IscS from Klebsiella pneumoniae subsp. pneumoniae (strain ATCC 700721 / MGH 78578).